Here is a 365-residue protein sequence, read N- to C-terminus: Potassium channel subfamily K member 9 (365 aa).

At 1-8 (MKKQNVRT) the chain is on the cytoplasmic side. The helical transmembrane segment at 9 to 29 (LSLIACTFTYLLVGAAVFDAL) threads the bilayer. At 30–88 (ESDHEMREEEKLKAEEIRIRGKYNISTEDYRQLELVILQSEPHRAGVQWKFAGSFYFAI) the chain is on the extracellular side. N-linked (GlcNAc...) asparagine glycosylation is present at N53. Positions 89–101 (TVITTIGYGHAAP) form an intramembrane region, pore-forming. K(+) contacts are provided by T93, I94, G95, and Y96. Residues 93-98 (TIGYGH) are selectivity filter 1. Residues 102 to 107 (GTDAGK) lie on the Extracellular side of the membrane. A helical membrane pass occupies residues 108–128 (AFCMFYAVLGIPLTLVMFQSL). Over 129–158 (GERMNTFVRYLLKRIKKCCGMRNTEVSMEN) the chain is Cytoplasmic. Residues 159-179 (MVTVGFFSCMGTLCIGAAAFS) traverse the membrane as a helical segment. Residues 180–194 (QCEEWSFFHAYYYCF) are Extracellular-facing. The pore-forming intramembrane region spans 195 to 207 (ITLTTIGFGDYVA). Residues T199, I200, G201, and F202 each contribute to the K(+) site. Residues 199–204 (TIGFGD) are selectivity filter 2. The Extracellular segment spans residues 208 to 218 (LQSKGALQRKP). Residues 219–239 (FYVAFSFMYILVGLTVIGAFL) traverse the membrane as a helical segment. The Cytoplasmic portion of the chain corresponds to 240–365 (NLVVLRFLTM…HRLMLRRKSV (126 aa)). An X-gate region spans residues 243–248 (VLRFLT).

The protein belongs to the two pore domain potassium channel (TC 1.A.1.8) family. Homodimer. Heterodimer with KCNK1. Heterodimer with KCNK3. In terms of tissue distribution, highly expressed in the brain.

It is found in the cell membrane. It localises to the mitochondrion inner membrane. The protein localises to the cell projection. The protein resides in the dendrite. The catalysed reaction is K(+)(in) = K(+)(out). It carries out the reaction Na(+)(in) = Na(+)(out). With respect to regulation, inhibited by extracellular acidification. Its function is as follows. K(+) channel that conducts voltage-dependent outward rectifying currents upon membrane depolarization. Voltage sensing is coupled to K(+) electrochemical gradient in an 'ion flux gating' mode where outward but not inward ion flow opens the gate. Changes ion selectivity and becomes permeable to Na(+) ions in response to extracellular acidification. Protonation of the pH sensor His-98 stabilizes C-type inactivation conformation likely converting the channel from outward K(+)-conducting, to inward Na(+)-conducting to nonconductive state. Homo- and heterodimerizes to form functional channels with distinct regulatory and gating properties. Allows K(+) currents with fast-gating kinetics important for the repolarization and hyperpolarization phases of action potentials. In granule neurons, hyperpolarizes the resting membrane potential to limit intrinsic neuronal excitability, but once the action potential threshold is reached, supports high-frequency action potential firing and increased neuronal excitability. Homomeric and/or heteromeric KCNK3:KCNK9 channels operate in cerebellar granule cells, whereas heteromeric KCNK1:KCNK9 enables currents in hippocampal dentate gyrus granule neurons. Dispensable for central chemosensory respiration i.e. breathing controlled by brainstem CO2/pH, it rather conducts pH-sensitive currents and controls the firing rate of serotonergic raphe neurons involved in potentiation of the respiratory chemoreflex. In retinal ganglion cells, mediates outward rectifying currents that regulate action potentials in response to acidification of the synaptic cleft. Involved in transmission of image-forming and nonimage-forming visual information in the retina. In adrenal gland, contributes to the maintenance of a hyperpolarized resting membrane potential of aldosterone-producing cells at zona glomerulosa and limits aldosterone release as part of a regulatory mechanism that controls arterial blood pressure and electrolyte homeostasis. The polypeptide is Potassium channel subfamily K member 9 (KCNK9) (Cavia porcellus (Guinea pig)).